Consider the following 356-residue polypeptide: Outer membrane protein Omp38 (356 aa).

An N-terminal signal peptide occupies residues 1–19 (MKLSRIALATMLVAAPLAA). In terms of domain architecture, OmpA-like spans 221 to 339 (ELTEDLNMEL…RVFATITGSR (119 aa)). N237, D271, T273, N279, and R286 together coordinate meso-2,6-diaminopimelate.

Belongs to the outer membrane OOP (TC 1.B.6) superfamily. In terms of assembly, homotrimer. Forms a pore with a size of 1.3 nm.

The protein resides in the cell outer membrane. It localises to the host mitochondrion. Functionally, functions as a porin. Induces apoptosis in human cell lines through caspase-dependent and AIF-dependent pathways. Purified Omp38 enters host cell and localizes to the mitochondria, which presumably leads to a release of proapoptotic molecules such as cytochrome c and AIF (apoptosis-inducing factor). Binds peptidoglycan, contributes to cell wall maintenance. This Acinetobacter baumannii (strain ATCC 19606 / DSM 30007 / JCM 6841 / CCUG 19606 / CIP 70.34 / NBRC 109757 / NCIMB 12457 / NCTC 12156 / 81) protein is Outer membrane protein Omp38.